The chain runs to 415 residues: Gamma-glutamyl phosphate reductase (415 aa).

It belongs to the gamma-glutamyl phosphate reductase family.

Its subcellular location is the cytoplasm. It catalyses the reaction L-glutamate 5-semialdehyde + phosphate + NADP(+) = L-glutamyl 5-phosphate + NADPH + H(+). Its pathway is amino-acid biosynthesis; L-proline biosynthesis; L-glutamate 5-semialdehyde from L-glutamate: step 2/2. Its function is as follows. Catalyzes the NADPH-dependent reduction of L-glutamate 5-phosphate into L-glutamate 5-semialdehyde and phosphate. The product spontaneously undergoes cyclization to form 1-pyrroline-5-carboxylate. The chain is Gamma-glutamyl phosphate reductase from Mycolicibacterium vanbaalenii (strain DSM 7251 / JCM 13017 / BCRC 16820 / KCTC 9966 / NRRL B-24157 / PYR-1) (Mycobacterium vanbaalenii).